The following is a 244-amino-acid chain: 6-carboxyhexanoate--CoA ligase (244 aa).

Belongs to the BioW family. As to quaternary structure, homodimer. Mg(2+) serves as cofactor.

It catalyses the reaction heptanedioate + ATP + CoA = 6-carboxyhexanoyl-CoA + AMP + diphosphate. It participates in metabolic intermediate metabolism; pimeloyl-CoA biosynthesis; pimeloyl-CoA from pimelate: step 1/1. Its function is as follows. Catalyzes the transformation of pimelate into pimeloyl-CoA with concomitant hydrolysis of ATP to AMP. In Methanococcus maripaludis (strain C7 / ATCC BAA-1331), this protein is 6-carboxyhexanoate--CoA ligase.